The primary structure comprises 425 residues: 5'-deoxyadenosine deaminase (425 aa).

Zn(2+)-binding residues include His62 and His64. Residues Glu91 and His183 each contribute to the substrate site. His210 lines the Zn(2+) pocket. Residues Glu213 and Asp298 each coordinate substrate. Position 298 (Asp298) interacts with Zn(2+).

Belongs to the metallo-dependent hydrolases superfamily. MTA/SAH deaminase family. Homotetramer. Zn(2+) serves as cofactor.

It carries out the reaction 5'-deoxyadenosine + H2O + H(+) = 5'-deoxyinosine + NH4(+). The enzyme catalyses S-adenosyl-L-homocysteine + H2O + H(+) = S-inosyl-L-homocysteine + NH4(+). The catalysed reaction is S-methyl-5'-thioadenosine + H2O + H(+) = S-methyl-5'-thioinosine + NH4(+). It catalyses the reaction adenosine + H2O + H(+) = inosine + NH4(+). It participates in amino-acid biosynthesis; S-adenosyl-L-methionine biosynthesis. Its function is as follows. Catalyzes the deamination of three SAM-derived enzymatic products, namely 5'-deoxyadenosine, S-adenosyl-L-homocysteine, and 5'-methylthioadenosine, to produce the inosine analogs. Can also deaminate adenosine. The preferred substrate for this enzyme is 5'-deoxyadenosine, but all these substrates are efficiently deaminated. Likely functions in a S-adenosyl-L-methionine (SAM) recycling pathway from S-adenosyl-L-homocysteine (SAH) produced from SAM-dependent methylation reactions. May also be involved in the recycling of 5'-deoxyadenosine, whereupon the 5'-deoxyribose moiety of 5'-deoxyinosine is further metabolized to deoxyhexoses used for the biosynthesis of aromatic amino acids in methanogens. The chain is 5'-deoxyadenosine deaminase from Methanosphaera stadtmanae (strain ATCC 43021 / DSM 3091 / JCM 11832 / MCB-3).